The chain runs to 189 residues: Elongation factor P (189 aa).

It belongs to the elongation factor P family.

Its subcellular location is the cytoplasm. It functions in the pathway protein biosynthesis; polypeptide chain elongation. Involved in peptide bond synthesis. Stimulates efficient translation and peptide-bond synthesis on native or reconstituted 70S ribosomes in vitro. Probably functions indirectly by altering the affinity of the ribosome for aminoacyl-tRNA, thus increasing their reactivity as acceptors for peptidyl transferase. This is Elongation factor P from Rhizobium radiobacter (Agrobacterium tumefaciens).